A 1040-amino-acid polypeptide reads, in one-letter code: Kinesin-like protein KIN-14H (1040 aa).

The Calponin-homology (CH) domain maps to 54 to 176; it reads DLRRYEAARW…CVLALKSYRE (123 aa). A disordered region spans residues 208–242; that stretch reads SEVPVDAVTNSPSSTPSSEQPLLDQSDSNTKNDGT. The segment covering 215–242 has biased composition (polar residues); it reads VTNSPSSTPSSEQPLLDQSDSNTKNDGT. Residues 434-754 enclose the Kinesin motor domain; sequence SIRVYCRVRP…LKFAERVATV (321 aa). 517 to 524 contributes to the ATP binding site; it reads GQTGSGKT. Positions 761 to 796 form a coiled coil; sequence VNKDTSEVKELKEQIASLKLALARKESGADQTQLQR. A compositionally biased stretch (low complexity) spans 809–818; it reads LGVSSSFSKS. Disordered stretches follow at residues 809–871, 887–926, and 969–1040; these read LGVS…GKEE, EDEI…KCNS, and MPRP…QNPK. A compositionally biased stretch (polar residues) spans 840 to 851; sequence IEGQSDSASSLD. Positions 887 to 923 are enriched in basic and acidic residues; sequence EDEITRSSKPENRAHTQLEKRTSSLKREATRGVDKNK. A compositionally biased stretch (polar residues) spans 1018-1031; sequence SPGQTSSRHNNSTV.

The protein belongs to the TRAFAC class myosin-kinesin ATPase superfamily. Kinesin family. KIN-14 subfamily.

The protein is Kinesin-like protein KIN-14H of Arabidopsis thaliana (Mouse-ear cress).